A 590-amino-acid polypeptide reads, in one-letter code: V-type ATP synthase alpha chain (590 aa).

Position 232-239 (232-239 (GPFGSGKT)) interacts with ATP.

Belongs to the ATPase alpha/beta chains family.

It catalyses the reaction ATP + H2O + 4 H(+)(in) = ADP + phosphate + 5 H(+)(out). In terms of biological role, produces ATP from ADP in the presence of a proton gradient across the membrane. The V-type alpha chain is a catalytic subunit. This Thermoanaerobacter pseudethanolicus (strain ATCC 33223 / 39E) (Clostridium thermohydrosulfuricum) protein is V-type ATP synthase alpha chain.